We begin with the raw amino-acid sequence, 407 residues long: Putative two-component response regulator ARR19 (407 aa).

The Response regulatory domain occupies 35 to 150 (NVLVVDTNFT…VMANIWQHIV (116 aa)). Residue D86 is modified to 4-aspartylphosphate. Residues 214-217 (RKPR) carry the Nuclear localization signal motif. The segment at residues 217–271 (RMTWTEELHQKFLEAIEIIGGIEKANPKVLVECLQEMRIEGITRSNVASHLQKHR) is a DNA-binding region (myb-like GARP).

The protein belongs to the ARR family. Type-B subfamily. Binds the target DNA as a monomer. Post-translationally, two-component system major event consists of a His-to-Asp phosphorelay between a sensor histidine kinase (HK) and a response regulator (RR). In plants, the His-to-Asp phosphorelay involves an additional intermediate named Histidine-containing phosphotransfer protein (HPt). This multistep phosphorelay consists of a His-Asp-His-Asp sequential transfer of a phosphate group between first a His and an Asp of the HK protein, followed by the transfer to a conserved His of the HPt protein and finally the transfer to an Asp in the receiver domain of the RR protein. Detected in trichomes and siliques.

It localises to the nucleus. Its function is as follows. Putative transcriptional activator that binds specifically to the DNA sequence 5'-[AG]GATT-3'. Functions as a response regulator involved in His-to-Asp phosphorelay signal transduction system. Phosphorylation of the Asp residue in the receiver domain activates the ability of the protein to promote the transcription of target genes. Could directly activate some type-A response regulators in response to cytokinins. The chain is Putative two-component response regulator ARR19 (ARR19) from Arabidopsis thaliana (Mouse-ear cress).